The chain runs to 81 residues: Beta-defensin 34 (81 aa).

A signal peptide spans 1-20 (MKTFLFLFAVLFFWSQPRMH). Disulfide bonds link Cys28–Cys55, Cys35–Cys49, and Cys39–Cys56. Residues 62-72 (CGRSKGNQSDE) are compositionally biased toward polar residues. The disordered stretch occupies residues 62–81 (CGRSKGNQSDEGSGHMGTRG).

The protein belongs to the beta-defensin family. In terms of tissue distribution, only expressed in epididymis (caput, corpus and cauda).

It localises to the secreted. In terms of biological role, has antibacterial activity. This chain is Beta-defensin 34 (Defb34), found in Mus musculus (Mouse).